The primary structure comprises 285 residues: Nudix hydrolase 15, mitochondrial (285 aa).

The transit peptide at 1 to 23 (MFLLYRRLPSFARTTTTTLLCKS) directs the protein to the mitochondrion. Met24 bears the N-acetylmethionine mark. 2 disordered regions span residues 51–72 (RQYK…TDQE) and 129–152 (THSG…GMTA). The 157-residue stretch at 99–255 (PKRAAVLICL…DKDYMIWGLT (157 aa)) folds into the Nudix hydrolase domain. Residues 140–161 (KAEEDDKDDGMTATREAEEEIG) carry the Nudix box motif. Glu155 and Glu159 together coordinate Mg(2+).

Belongs to the Nudix hydrolase family. The cofactor is Mg(2+). It depends on Mn(2+) as a cofactor. Expressed in roots, leaves, stems and inflorescences.

The protein resides in the mitochondrion. In terms of biological role, coenzyme A diphosphatase which mediates the cleavage of oxidized CoA. Can use malonyl-CoA, hexanoyl-CoA, lauroyl-CoA, myristoyl-CoA and palmitoyl-CoA as substrates, but not isobutyryl-CoA or propionyl-CoA. This chain is Nudix hydrolase 15, mitochondrial (NUDT15), found in Arabidopsis thaliana (Mouse-ear cress).